Consider the following 446-residue polypeptide: Chromosomal replication initiator protein DnaA (446 aa).

Residues 1–72 (MENILDLWNQ…ADTIYELTGE (72 aa)) form a domain I, interacts with DnaA modulators region. The tract at residues 72 to 109 (EELSVKFVIPQNQDEENFLPKPQVKKAAKEEPSDFPQS) is domain II. The interval 110–326 (MLNPKYTFDT…GALIRVVAYS (217 aa)) is domain III, AAA+ region. ATP-binding residues include G154, G156, K157, and T158. The tract at residues 327 to 446 (SLINKDINAD…QVKEIKELLK (120 aa)) is domain IV, binds dsDNA.

The protein belongs to the DnaA family. In terms of assembly, oligomerizes as a right-handed, spiral filament on DNA at oriC.

The protein localises to the cytoplasm. Its function is as follows. Plays an essential role in the initiation and regulation of chromosomal replication. ATP-DnaA binds to the origin of replication (oriC) to initiate formation of the DNA replication initiation complex once per cell cycle. Binds the DnaA box (a 9 base pair repeat at the origin) and separates the double-stranded (ds)DNA. Forms a right-handed helical filament on oriC DNA; dsDNA binds to the exterior of the filament while single-stranded (ss)DNA is stabiized in the filament's interior. The ATP-DnaA-oriC complex binds and stabilizes one strand of the AT-rich DNA unwinding element (DUE), permitting loading of DNA polymerase. After initiation quickly degrades to an ADP-DnaA complex that is not apt for DNA replication. Binds acidic phospholipids. The chain is Chromosomal replication initiator protein DnaA from Bacillus velezensis (strain DSM 23117 / BGSC 10A6 / LMG 26770 / FZB42) (Bacillus amyloliquefaciens subsp. plantarum).